The primary structure comprises 194 residues: Fatty acid metabolism regulator protein (194 aa).

The HTH tetR-type domain occupies 5–65 (RPKYMQIIDA…SLFKEKMGQF (61 aa)). The segment at residues 28–47 (QVSKIAKQAGVADGTIYLYF) is a DNA-binding region (H-T-H motif).

As to quaternary structure, homodimer. Binds to DNA.

Its subcellular location is the cytoplasm. Functionally, transcriptional regulator in fatty acid degradation. Represses transcription of genes required for fatty acid transport and beta-oxidation, including acdA, fadA, fadB, fadE, fadF, fadG, fadH, fadM, fadN, lcfA and lcfB. Binding of FadR to DNA is specifically inhibited by long chain fatty acyl-CoA compounds of 14-20 carbon atoms in length. The polypeptide is Fatty acid metabolism regulator protein (fadR) (Bacillus subtilis (strain 168)).